We begin with the raw amino-acid sequence, 247 residues long: Tetraspanin-18 (247 aa).

Topologically, residues 1–15 (MEGDCLSCMKYLMFL) are cytoplasmic. The chain crosses the membrane as a helical span at residues 16–36 (FNFFIFLGGACLLGVGIWVIV). Over 37–49 (DPTGFREIVAANP) the chain is Extracellular. The chain crosses the membrane as a helical span at residues 50-70 (LLFTGAYIMLAMGAMLFLLGF). Over 71–82 (LGCCGAIRENKC) the chain is Cytoplasmic. The helical transmembrane segment at 83-103 (LLLFFFMFILLIFLAELSAAI) threads the bilayer. At 104–222 (LAFIFRENLT…SFETYVYLAG (119 aa)) the chain is on the extracellular side. N-linked (GlcNAc...) asparagine glycosylation is found at asparagine 111 and asparagine 129. Residues 223–243 (ALAIGVLAIELFAMIFAMCLF) traverse the membrane as a helical segment. The Cytoplasmic portion of the chain corresponds to 244-247 (RGIQ).

The protein belongs to the tetraspanin (TM4SF) family.

The protein resides in the membrane. Its function is as follows. Maintains CDH6 protein and promotes CDH6-dependent adherens junctions, inhibiting neural crest migration. In Gallus gallus (Chicken), this protein is Tetraspanin-18.